A 34-amino-acid chain; its full sequence is ISIVSLFKAITDMLLTEQIYANYFSTPRLRFYPI.

The chain is Egg-releasing peptide from Aplysia californica (California sea hare).